The following is a 365-amino-acid chain: G-protein coupled receptor 4 (365 aa).

Over 1-10 (MDNSTGTWEG) the chain is Extracellular. Asparagine 3 is a glycosylation site (N-linked (GlcNAc...) asparagine). The chain crosses the membrane as a helical span at residues 11-47 (CHVDSRVDHLFPPSLYIFVIGVGLPTNCLALWAAYRQ). Disulfide bonds link cysteine 11–cysteine 260 and cysteine 92–cysteine 170. Over 48–51 (VRQR) the chain is Cytoplasmic. The chain crosses the membrane as a helical span at residues 52–82 (NELGVYLMNLSIADLLYICTLPLWVDYFLHH). Topologically, residues 83–87 (DNWIH) are extracellular. The chain crosses the membrane as a helical span at residues 88–123 (GPGSCKLFGFIFYSNIYISIAFLCCISVDRYLAVAH). Residues 124-131 (PLRFARLR) lie on the Cytoplasmic side of the membrane. A helical membrane pass occupies residues 132 to 158 (RVKTAVAVSSVVWATELGANSAPLFHD). Residues 159–174 (ELFRDRYNHTFCFEKF) lie on the Extracellular side of the membrane. The tract at residues 159 to 174 (ELFRDRYNHTFCFEKF) is extracellular loop 2 (ECL2). Residue asparagine 166 is glycosylated (N-linked (GlcNAc...) asparagine). The helical transmembrane segment at 175-212 (PMERWVAWMNLYRVFVGFLFPWALMLLCYRGILRAVQS) threads the bilayer. The Cytoplasmic portion of the chain corresponds to 213 to 216 (SVST). Residues 217–252 (ERQEKVKIKRLALSLIAIVLVCFAPYHALLLSRSAV) form a helical membrane-spanning segment. At 253–262 (YLGRPWDCGF) the chain is on the extracellular side. A helical transmembrane segment spans residues 263 to 291 (EERVFSAYHSSLAFTSLNCVADPILYCLV). The Cytoplasmic portion of the chain corresponds to 292 to 365 (NEGARSDVAK…PLKVLLPPAQ (74 aa)).

Belongs to the G-protein coupled receptor 1 family.

It localises to the cell membrane. Its activity is regulated as follows. Activated by a network of residues that connects an extracellular-facing cavity to Glu-147, a conserved charged residue buried in the transmembrane core of the receptor. Protonation likely drives conformational changes in extracellular loop 2 (ECL2), which stabilizes movement of transmembrane 3 (TM3) and a series of rearrangements that connect the extracellular-facing cavity to Glu-147, a residue only conserved in proton-sensing G-protein coupled receptors. Its function is as follows. Proton-sensing G-protein coupled receptor activated by extracellular pH, which is required to monitor pH changes and generate adaptive reactions. Activated by an optimal pH of 6.8-7.2. Ligand binding causes a conformation change that triggers signaling via guanine nucleotide-binding proteins (G proteins) and modulates the activity of downstream effectors, such as adenylate cyclase. GPR4 is mainly coupled to G(s) G proteins and mediates activation of adenylate cyclase activity. May also couple with G(q) and G(12)/G(13) G proteins. Acts as a key regulator of respiratory sensitivity to CO2/H(+) in brain retrotrapezoid nucleus neurons: acts by mediating detection of protons generated by the formation of carbonic acid in the blood, an important mechanism to impulse to breathe. Also acts as a regulator of acid secretion in the kidney collecting duct by maintaining acid-base homeostasis in the kidney. Acidosis-induced GPR4 activation increases paracellular gap formation and permeability of vascular endothelial cells, possibly through the G(12)/G(13)/Rho GTPase signaling pathway. This chain is G-protein coupled receptor 4, found in Rattus norvegicus (Rat).